Here is a 427-residue protein sequence, read N- to C-terminus: Serine--tRNA ligase (427 aa).

231–233 (TAE) is an L-serine binding site. 262 to 264 (RSE) contributes to the ATP binding site. Glutamate 285 is an L-serine binding site. 349-352 (EISS) provides a ligand contact to ATP. Serine 385 lines the L-serine pocket.

The protein belongs to the class-II aminoacyl-tRNA synthetase family. Type-1 seryl-tRNA synthetase subfamily. As to quaternary structure, homodimer. The tRNA molecule binds across the dimer.

It is found in the cytoplasm. It carries out the reaction tRNA(Ser) + L-serine + ATP = L-seryl-tRNA(Ser) + AMP + diphosphate + H(+). The catalysed reaction is tRNA(Sec) + L-serine + ATP = L-seryl-tRNA(Sec) + AMP + diphosphate + H(+). It participates in aminoacyl-tRNA biosynthesis; selenocysteinyl-tRNA(Sec) biosynthesis; L-seryl-tRNA(Sec) from L-serine and tRNA(Sec): step 1/1. In terms of biological role, catalyzes the attachment of serine to tRNA(Ser). Is also able to aminoacylate tRNA(Sec) with serine, to form the misacylated tRNA L-seryl-tRNA(Sec), which will be further converted into selenocysteinyl-tRNA(Sec). In Brucella abortus (strain S19), this protein is Serine--tRNA ligase.